Here is a 382-residue protein sequence, read N- to C-terminus: Galactokinase (382 aa).

34-37 (EHTD) is a substrate binding site. 124–130 (GAGLSSS) lines the ATP pocket. 2 residues coordinate Mg(2+): serine 130 and glutamate 162. Aspartate 174 (proton acceptor) is an active-site residue. Tyrosine 223 provides a ligand contact to substrate.

This sequence belongs to the GHMP kinase family. GalK subfamily.

It is found in the cytoplasm. The catalysed reaction is alpha-D-galactose + ATP = alpha-D-galactose 1-phosphate + ADP + H(+). It participates in carbohydrate metabolism; galactose metabolism. Functionally, catalyzes the transfer of the gamma-phosphate of ATP to D-galactose to form alpha-D-galactose-1-phosphate (Gal-1-P). The sequence is that of Galactokinase from Salmonella paratyphi B (strain ATCC BAA-1250 / SPB7).